The sequence spans 236 residues: 7-cyano-7-deazaguanine synthase (236 aa).

13 to 23 (FSGGQDSTVCL) serves as a coordination point for ATP. Residues cysteine 200, cysteine 215, cysteine 218, and cysteine 221 each coordinate Zn(2+).

Belongs to the QueC family. Zn(2+) is required as a cofactor.

It catalyses the reaction 7-carboxy-7-deazaguanine + NH4(+) + ATP = 7-cyano-7-deazaguanine + ADP + phosphate + H2O + H(+). It participates in purine metabolism; 7-cyano-7-deazaguanine biosynthesis. In terms of biological role, catalyzes the ATP-dependent conversion of 7-carboxy-7-deazaguanine (CDG) to 7-cyano-7-deazaguanine (preQ(0)). The protein is 7-cyano-7-deazaguanine synthase of Parvibaculum lavamentivorans (strain DS-1 / DSM 13023 / NCIMB 13966).